We begin with the raw amino-acid sequence, 340 residues long: Nucleoid-associated protein PSPA7_4451 (340 aa).

It belongs to the YejK family.

It is found in the cytoplasm. It localises to the nucleoid. In Pseudomonas paraeruginosa (strain DSM 24068 / PA7) (Pseudomonas aeruginosa (strain PA7)), this protein is Nucleoid-associated protein PSPA7_4451.